Reading from the N-terminus, the 409-residue chain is Putative lipoate-protein ligase A (409 aa).

One can recognise a BPL/LPL catalytic domain in the interval 146–330 (GPDNCRLLFY…RFQKTFKVDG (185 aa)). Residues arginine 188, 193 to 196 (GTVL), and lysine 249 contribute to the ATP site. Lysine 249 provides a ligand contact to (R)-lipoate.

The protein belongs to the LplA family. In terms of assembly, monomer.

The enzyme catalyses L-lysyl-[lipoyl-carrier protein] + (R)-lipoate + ATP = N(6)-[(R)-lipoyl]-L-lysyl-[lipoyl-carrier protein] + AMP + diphosphate + H(+). The protein operates within protein modification; protein lipoylation via exogenous pathway; protein N(6)-(lipoyl)lysine from lipoate: step 1/2. Its pathway is protein modification; protein lipoylation via exogenous pathway; protein N(6)-(lipoyl)lysine from lipoate: step 2/2. Functionally, catalyzes both the ATP-dependent activation of exogenously supplied lipoate to lipoyl-AMP and the transfer of the activated lipoyl onto the lipoyl domains of lipoate-dependent enzymes. This is Putative lipoate-protein ligase A (AIM22) from Saccharomyces cerevisiae (strain ATCC 204508 / S288c) (Baker's yeast).